The chain runs to 251 residues: SPbeta prophage-derived putative antirepressor protein YoqD (251 aa).

The protein is SPbeta prophage-derived putative antirepressor protein YoqD (yoqD) of Bacillus subtilis (strain 168).